The chain runs to 1140 residues: Protein FAM184A (1140 aa).

3 coiled-coil regions span residues 57 to 256 (ALNT…NKAQ), 296 to 800 (AILR…IEME), and 868 to 907 (RITD…LEFK). The segment at 1063–1128 (PNLSALESGG…EASPVASPDP (66 aa)) is disordered.

This sequence belongs to the FAM184 family.

Its subcellular location is the cytoplasm. It localises to the P-body. It is found in the cytoskeleton. The protein localises to the microtubule organizing center. The protein resides in the centrosome. Its subcellular location is the centriolar satellite. In Homo sapiens (Human), this protein is Protein FAM184A.